Here is a 152-residue protein sequence, read N- to C-terminus: UPF0266 membrane protein YobD (152 aa).

Helical transmembrane passes span Leu-6–Met-26, Val-45–His-65, and Ala-67–Ile-87.

It belongs to the UPF0266 family.

The protein resides in the cell inner membrane. This Salmonella dublin (strain CT_02021853) protein is UPF0266 membrane protein YobD.